Consider the following 383-residue polypeptide: Chorismate synthase (383 aa).

NADP(+) is bound by residues Arg-39 and Arg-45. Residues 127 to 129, 249 to 250, Gly-294, 309 to 313, and Arg-335 contribute to the FMN site; these read RAS, QS, and KPIPT.

The protein belongs to the chorismate synthase family. Homotetramer. It depends on FMNH2 as a cofactor.

It carries out the reaction 5-O-(1-carboxyvinyl)-3-phosphoshikimate = chorismate + phosphate. Its pathway is metabolic intermediate biosynthesis; chorismate biosynthesis; chorismate from D-erythrose 4-phosphate and phosphoenolpyruvate: step 7/7. In terms of biological role, catalyzes the anti-1,4-elimination of the C-3 phosphate and the C-6 proR hydrogen from 5-enolpyruvylshikimate-3-phosphate (EPSP) to yield chorismate, which is the branch point compound that serves as the starting substrate for the three terminal pathways of aromatic amino acid biosynthesis. This reaction introduces a second double bond into the aromatic ring system. The chain is Chorismate synthase from Caldicellulosiruptor bescii (strain ATCC BAA-1888 / DSM 6725 / KCTC 15123 / Z-1320) (Anaerocellum thermophilum).